The chain runs to 81 residues: MTFFLVIILAISSSNYNVLAVSGPPKCIALCRPGYYERFECFHDCITEGYDDGSCVPGPTTAKCGIITKTTNKICYSFAFE.

The N-terminal stretch at 1–20 (MTFFLVIILAISSSNYNVLA) is a signal peptide. Disulfide bonds link Cys-31–Cys-55 and Cys-41–Cys-64.

The protein belongs to the DEFL family.

The protein resides in the secreted. The chain is Putative defensin-like protein 52 from Arabidopsis thaliana (Mouse-ear cress).